A 510-amino-acid chain; its full sequence is NAD(P)H-quinone oxidoreductase subunit 2 B, chloroplastic (510 aa).

The next 13 helical transmembrane spans lie at 24-44 (LLLF…GLIL), 57-77 (IPWL…ALLF), 99-119 (IFQF…VEYI), 124-144 (MAIT…MFLC), 149-169 (LITI…LSGY), 183-203 (YLLM…WLYG), 227-247 (PGIS…LSPA), 295-315 (WHLH…LIAI), 323-343 (MLAY…IVGD), 347-367 (GYAS…GTFA), 395-415 (ALSL…AGFF), 418-438 (LHLF…IGLL), and 484-504 (MIVC…IIAI).

It belongs to the complex I subunit 2 family. As to quaternary structure, NDH is composed of at least 16 different subunits, 5 of which are encoded in the nucleus.

The protein localises to the plastid. The protein resides in the chloroplast thylakoid membrane. It catalyses the reaction a plastoquinone + NADH + (n+1) H(+)(in) = a plastoquinol + NAD(+) + n H(+)(out). The catalysed reaction is a plastoquinone + NADPH + (n+1) H(+)(in) = a plastoquinol + NADP(+) + n H(+)(out). Functionally, NDH shuttles electrons from NAD(P)H:plastoquinone, via FMN and iron-sulfur (Fe-S) centers, to quinones in the photosynthetic chain and possibly in a chloroplast respiratory chain. The immediate electron acceptor for the enzyme in this species is believed to be plastoquinone. Couples the redox reaction to proton translocation, and thus conserves the redox energy in a proton gradient. The sequence is that of NAD(P)H-quinone oxidoreductase subunit 2 B, chloroplastic from Buxus microphylla (Littleleaf boxwood).